A 475-amino-acid chain; its full sequence is ATP synthase subunit beta (475 aa).

Gly-152–Thr-159 is a binding site for ATP.

It belongs to the ATPase alpha/beta chains family. As to quaternary structure, F-type ATPases have 2 components, CF(1) - the catalytic core - and CF(0) - the membrane proton channel. CF(1) has five subunits: alpha(3), beta(3), gamma(1), delta(1), epsilon(1). CF(0) has four main subunits: a(1), b(1), b'(1) and c(9-12).

The protein resides in the cell inner membrane. The enzyme catalyses ATP + H2O + 4 H(+)(in) = ADP + phosphate + 5 H(+)(out). Produces ATP from ADP in the presence of a proton gradient across the membrane. The catalytic sites are hosted primarily by the beta subunits. This Cereibacter sphaeroides (strain ATCC 17025 / ATH 2.4.3) (Rhodobacter sphaeroides) protein is ATP synthase subunit beta.